The sequence spans 257 residues: MESLPVFPNKFKAALAAKQVQIGCWSALSNPISTEVLGLAGFDWLVLDGEHAPNDISTFIPQLMALKGSASAPVVRVPTNEPVIIKRLLDIGFYNFLIPFVETKEEAEQAVASTRYPPEGIRGVSVSHRANMFGTVADYFAQSNKNITILVQIESQQGVDNVDAIAATEGVDCIFVGPSDLAAALGHLGNASHPDVQKAIQHIFNRASAHGKPSGILAPVEADARRYLEWGATFVAVGSDLGVFRSATQKLADTFKK.

The active-site Proton acceptor is the H51. Q152 is a binding site for substrate. E154 lines the Mg(2+) pocket. Residues S179 and D180 each contribute to the substrate site. Position 180 (D180) interacts with Mg(2+).

This sequence belongs to the HpcH/HpaI aldolase family. KDGluc aldolase subfamily. Homohexamer; trimer of dimers. It depends on Mg(2+) as a cofactor.

It carries out the reaction 5-dehydro-4-deoxy-D-glucarate = 2-hydroxy-3-oxopropanoate + pyruvate. The catalysed reaction is 2-dehydro-3-deoxy-D-glucarate = 2-hydroxy-3-oxopropanoate + pyruvate. It participates in carbohydrate acid metabolism; galactarate degradation; D-glycerate from galactarate: step 2/3. Functionally, catalyzes the reversible retro-aldol cleavage of both 5-keto-4-deoxy-D-glucarate and 2-keto-3-deoxy-D-glucarate to pyruvate and tartronic semialdehyde. The polypeptide is 5-keto-4-deoxy-D-glucarate aldolase (Shigella boydii serotype 18 (strain CDC 3083-94 / BS512)).